The chain runs to 113 residues: Small ribosomal subunit protein eS24 (113 aa).

This sequence belongs to the eukaryotic ribosomal protein eS24 family.

The protein is Small ribosomal subunit protein eS24 of Metallosphaera sedula (strain ATCC 51363 / DSM 5348 / JCM 9185 / NBRC 15509 / TH2).